Consider the following 345-residue polypeptide: Anthranilate phosphoribosyltransferase (345 aa).

Residues Gly-84, 87 to 88, Thr-92, 94 to 97, 112 to 120, and Ser-124 contribute to the 5-phospho-alpha-D-ribose 1-diphosphate site; these read GD, NIST, and KHGNRSVSS. Gly-84 provides a ligand contact to anthranilate. Position 96 (Ser-96) interacts with Mg(2+). Asn-115 provides a ligand contact to anthranilate. Arg-170 provides a ligand contact to anthranilate. Mg(2+) contacts are provided by Asp-229 and Glu-230.

This sequence belongs to the anthranilate phosphoribosyltransferase family. In terms of assembly, homodimer. Mg(2+) is required as a cofactor.

It carries out the reaction N-(5-phospho-beta-D-ribosyl)anthranilate + diphosphate = 5-phospho-alpha-D-ribose 1-diphosphate + anthranilate. The protein operates within amino-acid biosynthesis; L-tryptophan biosynthesis; L-tryptophan from chorismate: step 2/5. In terms of biological role, catalyzes the transfer of the phosphoribosyl group of 5-phosphorylribose-1-pyrophosphate (PRPP) to anthranilate to yield N-(5'-phosphoribosyl)-anthranilate (PRA). In Xanthomonas campestris pv. campestris (strain 8004), this protein is Anthranilate phosphoribosyltransferase.